A 474-amino-acid polypeptide reads, in one-letter code: tRNA-2-methylthio-N(6)-dimethylallyladenosine synthase (474 aa).

The MTTase N-terminal domain occupies 3 to 120; the sequence is KKLHIKTWGC…LPDMIDQVRR (118 aa). [4Fe-4S] cluster contacts are provided by cysteine 12, cysteine 49, cysteine 83, cysteine 157, cysteine 161, and cysteine 164. One can recognise a Radical SAM core domain in the interval 143–375; the sequence is RAEGPTAFVS…QDRITQQAMR (233 aa). Residues 378 to 441 form the TRAM domain; sequence RHMMGTVQRI…TNSLRGKFIR (64 aa).

The protein belongs to the methylthiotransferase family. MiaB subfamily. Monomer. The cofactor is [4Fe-4S] cluster.

The protein resides in the cytoplasm. The catalysed reaction is N(6)-dimethylallyladenosine(37) in tRNA + (sulfur carrier)-SH + AH2 + 2 S-adenosyl-L-methionine = 2-methylsulfanyl-N(6)-dimethylallyladenosine(37) in tRNA + (sulfur carrier)-H + 5'-deoxyadenosine + L-methionine + A + S-adenosyl-L-homocysteine + 2 H(+). Functionally, catalyzes the methylthiolation of N6-(dimethylallyl)adenosine (i(6)A), leading to the formation of 2-methylthio-N6-(dimethylallyl)adenosine (ms(2)i(6)A) at position 37 in tRNAs that read codons beginning with uridine. In Shewanella sp. (strain ANA-3), this protein is tRNA-2-methylthio-N(6)-dimethylallyladenosine synthase.